We begin with the raw amino-acid sequence, 202 residues long: Dephospho-CoA kinase (202 aa).

The DPCK domain occupies 5-202 (IVGLTGGIAS…DADYRARANP (198 aa)). 13-18 (ASGKSA) serves as a coordination point for ATP.

Belongs to the CoaE family.

It is found in the cytoplasm. The enzyme catalyses 3'-dephospho-CoA + ATP = ADP + CoA + H(+). It functions in the pathway cofactor biosynthesis; coenzyme A biosynthesis; CoA from (R)-pantothenate: step 5/5. In terms of biological role, catalyzes the phosphorylation of the 3'-hydroxyl group of dephosphocoenzyme A to form coenzyme A. The protein is Dephospho-CoA kinase of Xanthomonas axonopodis pv. citri (strain 306).